We begin with the raw amino-acid sequence, 163 residues long: MLTKIGLYTGSFDPVTNGHLDIVKRASGLFDQIYVGIFDNPTKKSYFKLEVRKAMLTQALADFTNVIVVTSHERLAIDVAKELRVTHLIRGLRNATDFEYEENLEYFNHLLAPNIETVYLISRNKWQALSSSRVRELIHFQSSLEDLVPQSVIAQVEKMNEKT.

Serine 11 contributes to the substrate binding site. Residues 11–12 (SF) and histidine 19 contribute to the ATP site. Positions 43, 76, and 90 each coordinate substrate. Residues 91-93 (GLR), glutamate 101, and 126-132 (WQALSSS) each bind ATP.

Belongs to the bacterial CoaD family. Homohexamer. Requires Mg(2+) as cofactor.

It localises to the cytoplasm. The catalysed reaction is (R)-4'-phosphopantetheine + ATP + H(+) = 3'-dephospho-CoA + diphosphate. It functions in the pathway cofactor biosynthesis; coenzyme A biosynthesis; CoA from (R)-pantothenate: step 4/5. In terms of biological role, reversibly transfers an adenylyl group from ATP to 4'-phosphopantetheine, yielding dephospho-CoA (dPCoA) and pyrophosphate. The protein is Phosphopantetheine adenylyltransferase of Streptococcus pyogenes serotype M2 (strain MGAS10270).